Here is a 506-residue protein sequence, read N- to C-terminus: Glutamate--tRNA ligase (506 aa).

The 'HIGH' region signature appears at P24–L34. A disordered region spans residues T124–D147. Residues V128–D147 show a composition bias toward basic and acidic residues. Residues K268–R272 carry the 'KMSKS' region motif. K271 contributes to the ATP binding site.

It belongs to the class-I aminoacyl-tRNA synthetase family. Glutamate--tRNA ligase type 1 subfamily. Monomer.

It is found in the cytoplasm. It catalyses the reaction tRNA(Glu) + L-glutamate + ATP = L-glutamyl-tRNA(Glu) + AMP + diphosphate. In terms of biological role, catalyzes the attachment of glutamate to tRNA(Glu) in a two-step reaction: glutamate is first activated by ATP to form Glu-AMP and then transferred to the acceptor end of tRNA(Glu). The sequence is that of Glutamate--tRNA ligase from Kocuria rhizophila (strain ATCC 9341 / DSM 348 / NBRC 103217 / DC2201).